The chain runs to 788 residues: Spastin (788 aa).

The disordered stretch occupies residues 1–105 (MVRTKNQSSS…PRSAGGPSSV (105 aa)). The Cytoplasmic portion of the chain corresponds to 1 to 116 (MVRTKNQSSS…KQNLYVVSFP (116 aa)). Residues 1 to 227 (MVRTKNQSSS…NRSGSGYSPG (227 aa)) form a required for localization to punctate cytoplasmic foci region. Composition is skewed to low complexity over residues 8–48 (SSSS…SSHR) and 57–75 (ATNVSSSSNRRTTPGSSPD). An intramembrane region (helical) is located at residues 117-137 (IIFLFNVLRSLIYQLFCIFRY). Over 138–788 (LYGASTKVIY…WSSDYGDITI (651 aa)) the chain is Cytoplasmic. The segment at 227-788 (GPGDPLLAKQ…WSSDYGDITI (562 aa)) is sufficient for interaction with microtubules and microtubule severing. Positions 240–315 (HRRAFEYISK…SMARDRLHFL (76 aa)) constitute an MIT domain. Positions 331–353 (EKQKANESREQQQKPQKAREAAD) are enriched in basic and acidic residues. The segment at 331–484 (EKQKANESRE…SGSGSGASTP (154 aa)) is disordered. Positions 387 to 400 (ATATTPTSSSSLAS) are enriched in low complexity. Composition is skewed to polar residues over residues 419 to 433 (NKSQTLPRNLGSKTS) and 453 to 469 (QFSSGRNTPPQRSRTPI). Positions 471–485 (NNGASGSGSGASTPV) are required for interaction with microtubules. 553 to 560 (GPPGNGKT) contributes to the ATP binding site.

This sequence belongs to the AAA ATPase family. Spastin subfamily. In terms of assembly, homohexamer. The homohexamer is stabilized by ATP-binding. The homohexamer may adopt a ring conformation through which microtubules pass prior to being severed. Interacts with microtubules. Interacts with atl; may be involved in microtubule dynamics.

The protein localises to the membrane. Its subcellular location is the cytoplasm. It is found in the cytoskeleton. The protein resides in the microtubule organizing center. It localises to the centrosome. The protein localises to the chromosome. Its subcellular location is the lipid droplet. It catalyses the reaction n ATP + n H2O + a microtubule = n ADP + n phosphate + (n+1) alpha/beta tubulin heterodimers.. Functionally, ATP-dependent microtubule severing protein. Stimulates microtubule minus-end depolymerization and poleward microtubule flux in the mitotic spindle. Regulates microtubule stability in the neuromuscular junction synapse. Involved in lipid metabolism by regulating the size and distribution of lipid droplets. Involved in axon regeneration by regulating microtubule severing. The chain is Spastin from Drosophila persimilis (Fruit fly).